The following is a 578-amino-acid chain: Probable arginine--tRNA ligase, mitochondrial (578 aa).

The transit peptide at 1–16 directs the protein to the mitochondrion; that stretch reads MACGFRRSIASQLSRV. Residues 133 to 135, H144, Y322, D326, and Q350 contribute to the L-arginine site; that span reads SPN. A 'HIGH' region motif is present at residues 133–144; sequence SPNVAKKFHVGH. The residue at position 568 (K568) is an N6-acetyllysine.

Belongs to the class-I aminoacyl-tRNA synthetase family.

Its subcellular location is the mitochondrion membrane. The catalysed reaction is tRNA(Arg) + L-arginine + ATP = L-arginyl-tRNA(Arg) + AMP + diphosphate. Catalyzes the attachment of arginine to tRNA(Arg) in a two-step reaction: arginine is first activated by ATP to form Arg-AMP and then transferred to the acceptor end of tRNA(Arg). The polypeptide is Probable arginine--tRNA ligase, mitochondrial (RARS2) (Bos taurus (Bovine)).